We begin with the raw amino-acid sequence, 205 residues long: Methylthioribulose-1-phosphate dehydratase (205 aa).

Positions 96 and 98 each coordinate Zn(2+).

Belongs to the aldolase class II family. MtnB subfamily. It depends on Zn(2+) as a cofactor.

The catalysed reaction is 5-(methylsulfanyl)-D-ribulose 1-phosphate = 5-methylsulfanyl-2,3-dioxopentyl phosphate + H2O. It functions in the pathway amino-acid biosynthesis; L-methionine biosynthesis via salvage pathway; L-methionine from S-methyl-5-thio-alpha-D-ribose 1-phosphate: step 2/6. In terms of biological role, catalyzes the dehydration of methylthioribulose-1-phosphate (MTRu-1-P) into 2,3-diketo-5-methylthiopentyl-1-phosphate (DK-MTP-1-P). In Pseudomonas aeruginosa (strain LESB58), this protein is Methylthioribulose-1-phosphate dehydratase.